A 78-amino-acid polypeptide reads, in one-letter code: Acyl carrier protein (78 aa).

The 76-residue stretch at M1 to K76 folds into the Carrier domain. Residue S36 is modified to O-(pantetheine 4'-phosphoryl)serine.

This sequence belongs to the acyl carrier protein (ACP) family. Post-translationally, 4'-phosphopantetheine is transferred from CoA to a specific serine of apo-ACP by AcpS. This modification is essential for activity because fatty acids are bound in thioester linkage to the sulfhydryl of the prosthetic group.

It is found in the cytoplasm. It participates in lipid metabolism; fatty acid biosynthesis. In terms of biological role, carrier of the growing fatty acid chain in fatty acid biosynthesis. The protein is Acyl carrier protein of Helicobacter pylori (strain Shi470).